The chain runs to 102 residues: Small ribosomal subunit protein bS6 (102 aa).

This sequence belongs to the bacterial ribosomal protein bS6 family.

Its function is as follows. Binds together with bS18 to 16S ribosomal RNA. This is Small ribosomal subunit protein bS6 from Deinococcus deserti (strain DSM 17065 / CIP 109153 / LMG 22923 / VCD115).